The primary structure comprises 470 residues: Synaptotagmin-17 (470 aa).

The interval 54–112 (PPWLMASRSNDKDGDSVHTASDVPLTPRTNSPDGRRSSSDTSKSTYSLTRRISSLDSRR) is disordered. A compositionally biased stretch (low complexity) spans 92–112 (SDTSKSTYSLTRRISSLDSRR). Ser-114 and Ser-115 each carry phosphoserine. C2 domains are found at residues 180 to 306 (QLGM…HWWK) and 317 to 451 (ELGE…EQWH).

Belongs to the synaptotagmin family.

It localises to the membrane. In terms of biological role, plays a role in dendrite formation by melanocytes. The sequence is that of Synaptotagmin-17 (Syt17) from Mus musculus (Mouse).